A 287-amino-acid chain; its full sequence is Glycine--tRNA ligase alpha subunit (287 aa).

This sequence belongs to the class-II aminoacyl-tRNA synthetase family. As to quaternary structure, tetramer of two alpha and two beta subunits.

It localises to the cytoplasm. It catalyses the reaction tRNA(Gly) + glycine + ATP = glycyl-tRNA(Gly) + AMP + diphosphate. In Petrotoga mobilis (strain DSM 10674 / SJ95), this protein is Glycine--tRNA ligase alpha subunit.